The following is a 92-amino-acid chain: Small ribosomal subunit protein bS18A (92 aa).

This sequence belongs to the bacterial ribosomal protein bS18 family. In terms of assembly, part of the 30S ribosomal subunit. Forms a tight heterodimer with protein bS6.

Binds as a heterodimer with protein bS6 to the central domain of the 16S rRNA, where it helps stabilize the platform of the 30S subunit. The protein is Small ribosomal subunit protein bS18A of Cupriavidus pinatubonensis (strain JMP 134 / LMG 1197) (Cupriavidus necator (strain JMP 134)).